Reading from the N-terminus, the 439-residue chain is Innexin-19 (439 aa).

Transmembrane regions (helical) follow at residues 33–53 (PLIL…GTPI), 103–123 (QWVP…CIFW), 199–219 (IVYS…FFIL), and 285–305 (VFAF…CSFI).

Belongs to the pannexin family.

Its subcellular location is the cell membrane. It is found in the cell junction. It localises to the gap junction. Functionally, structural component of the gap junctions that specifically coordinates left-right asymmetry in the developing nervous system. Acts by forming gap junction network linking embryonic neurons and providing electrical coupling between cells, leading to promote or inhibit AWC signaling. The sequence is that of Innexin-19 (inx-19) from Caenorhabditis briggsae.